Reading from the N-terminus, the 1577-residue chain is MEAGSVVRAIFDFCPSVSEELPLFVGDIIEVLAVVDEFWLLGKKEDVTGQFPSSFVEIVTIPSLKEGERLFVCICEFTSQELDNLPLHRGDLVILDGIPTAGWLQGRSCWGARGFFPSSCVRELCLSSQSRQWHSQSALFQIPEYSMGQARALMGLSAQLDEELDFREGDVITIIGVPEPGWFEGELEGRRGIFPEGFVELLGPLRTVDESVSSGNQDDCIVNGEVDTPVGEEEIGPDEDEEEPGTYGVALYRFQALEPNELDFEVGDKIRILATLEDGWLEGSLKGRTGIFPYRFVKLCPDTRVEETMALPQEGSLARIPETSLDCLENTLGVEEQRHETSDHEAEEPDCIISEAPTSPLGHLTSEYDTDRNSYQDEDTAGGPPRSPGVEWEMPLATDSPTSDPTEVVNGISSQPQVPFHPNLQKSQYYSTVGGSHPHSEQYPDLLPLEARTRDYASLPPKRMYSQLKTLQKPVLPLYRGSSVSASRVVKPRQSSPQLHNLASYTKKHHTSSVYSISERLEMKPGPQAQGLVMEAATHSQGDGSTDLDSKLTQQLIEFEKSLAGPGTEPDKILRHFSIMDFNSEKDIVRGSSKLITEQELPERRKALRPPPPRPCTPVSTSPHLLVDQNLKPAPPLVVRPSRPAPLPPSAQQRTNAVSPKLLSRHRPTCETLEKEGPGHMGRSLDQTSPCPLVLVRIEEMERDLDMYSRAQEELNLMLEEKQDESSRAETLEDLKFCESNIESLNMELQQLREMTLLSSQSSSLVAPSGSVSAENPEQRMLEKRAKVIEELLQTERDYIRDLEMCIERIMVPMQQAQVPNIDFEGLFGNMQMVIKVSKQLLAALEISDAVGPVFLGHRDELEGTYKIYCQNHDEAIALLEIYEKDEKIQKHLQDSLADLKSLYNEWGCTNYINLGSFLIKPVQRVMRYPLLLMELLNSTPESHPDKVPLTNAVLAVKEINVNINEYKRRKDLVLKYRKGDEDSLMEKISKLNIHSIIKKSNRVSSHLKHLTGFAPQIKDEVFEETEKNFRMQERLIKSFIRDLSLYLQHIRESACVKVVAAVSMWDVCMERGHRDLEQFERVHRYISDQLFTNFKERTERLVISPLNQLLSMFTGPHKLVQKRFDKLLDFYNCTERAEKLKDKKTLEELQSARNNYEALNAQLLDELPKFHQYAQGLFTNCVHGYAEAHCDFVHQALEQLKPLLSLLKVAGREGNLIAIFHEEHSRVLQQLQVFTFFPESLPATKKPFERKTIDRQSARKPLLGLPSYMLQSEELRASLLARYPPEKLFQAERNFNAAQDLDVSLLEGDLVGVIKKKDPMGSQNRWLIDNGVTKGFVYSSFLKPYNPRRSHSDASVGSHSSTESEHGSSSPRFPRQNSGSTLTFNPSSMAVSFTSGSCQKQPQDASPPPKECDQGTLSASLNPSNSESSPSRCPSDPDSTSQPRSGDSADVARDVKQPTATPRSYRNFRHPEIVGYSVPGRNGQSQDLVKGCARTAQAPEDRSTEPDGSEAEGNQVYFAVYTFKARNPNELSVSANQKLKILEFKDVTGNTEWWLAEVNGKKGYVPSNYIRKTEYT.

Met-1 bears the N-acetylmethionine mark. SH3 domains lie at 2 to 61 (EAGS…IVTI), 66 to 126 (EGER…ELCL), 145 to 204 (YSMG…LLGP), and 243 to 302 (EPGT…LCPD). Disordered regions lie at residues 211–244 (SVSSGNQDDCIVNGEVDTPVGEEEIGPDEDEEEP) and 335–395 (EEQR…WEMP). A compositionally biased stretch (acidic residues) spans 230 to 244 (VGEEEIGPDEDEEEP). Residues 335 to 344 (EEQRHETSDH) are compositionally biased toward basic and acidic residues. Phosphoserine is present on Ser-496. Disordered regions lie at residues 591 to 624 (GSSKLITEQELPERRKALRPPPPRPCTPVSTSPH) and 639 to 659 (VRPSRPAPLPPSAQQRTNAVS). A compositionally biased stretch (pro residues) spans 639–649 (VRPSRPAPLPP). The residue at position 684 (Ser-684) is a Phosphoserine. Residues 693–757 (LVLVRIEEME…ELQQLREMTL (65 aa)) are a coiled coil. Residues 784–967 (KRAKVIEELL…KEINVNINEY (184 aa)) form the DH domain. The BAR domain occupies 1008–1217 (LKHLTGFAPQ…LKVAGREGNL (210 aa)). Residues 1136 to 1173 (ERAEKLKDKKTLEELQSARNNYEALNAQLLDELPKFHQ) adopt a coiled-coil conformation. One can recognise an SH3 5 domain in the interval 1285 to 1348 (PPEKLFQAER…YSSFLKPYNP (64 aa)). The tract at residues 1348–1487 (PRRSHSDASV…SVPGRNGQSQ (140 aa)) is disordered. Over residues 1376–1405 (RQNSGSTLTFNPSSMAVSFTSGSCQKQPQD) the composition is skewed to polar residues. Residues 1419-1442 (SASLNPSNSESSPSRCPSDPDSTS) are compositionally biased toward low complexity. The region spanning 1513 to 1576 (EGNQVYFAVY…PSNYIRKTEY (64 aa)) is the SH3 6 domain.

As to quaternary structure, binds DNM1 via its N-terminal SH3 domains. The C-terminal SH3 domain binds a complex containing actin, tubulin, Hsp70 and actin-regulatory proteins, such as ENAH, EVL, WIRE, CR16, WAVE1 and NAP1L1. Interacts with FASLG. Interacts (via SH3 domain 6) with WASL. Interacts (via SH3 domain 6) interacts with ENAH. Interacts (via C-terminal domain) with TJP1; required for the apical cell-cell junction localization of DNMBP. In terms of assembly, (Microbial infection) Interacts (via SH3 domain 6) with L.monocytogenes InlC. In terms of tissue distribution, detected in heart, brain, lung, liver, skeletal muscle, kidney and pancreas.

The protein localises to the cytoplasm. The protein resides in the golgi apparatus. It is found in the golgi stack. It localises to the cytoskeleton. Its subcellular location is the synapse. The protein localises to the cell junction. Functionally, plays a critical role as a guanine nucleotide exchange factor (GEF) for CDC42 in several intracellular processes associated with the actin and microtubule cytoskeleton. Regulates the structure of apical junctions through F-actin organization in epithelial cells. Participates in the normal lumenogenesis of epithelial cell cysts by regulating spindle orientation. Plays a role in ciliogenesis. May play a role in membrane trafficking between the cell surface and the Golgi. The protein is Dynamin-binding protein of Homo sapiens (Human).